Here is a 271-residue protein sequence, read N- to C-terminus: Formamidopyrimidine-DNA glycosylase (271 aa).

The Schiff-base intermediate with DNA role is filled by P2. E3 acts as the Proton donor in catalysis. K58 serves as the catalytic Proton donor; for beta-elimination activity. DNA-binding residues include H91 and R109. Residues 236–270 form an FPG-type zinc finger; it reads FVYGREGLACRVCATPVRRVVIGQRSTFFCPRCQR. R260 (proton donor; for delta-elimination activity) is an active-site residue.

This sequence belongs to the FPG family. Monomer. Zn(2+) is required as a cofactor.

The enzyme catalyses Hydrolysis of DNA containing ring-opened 7-methylguanine residues, releasing 2,6-diamino-4-hydroxy-5-(N-methyl)formamidopyrimidine.. The catalysed reaction is 2'-deoxyribonucleotide-(2'-deoxyribose 5'-phosphate)-2'-deoxyribonucleotide-DNA = a 3'-end 2'-deoxyribonucleotide-(2,3-dehydro-2,3-deoxyribose 5'-phosphate)-DNA + a 5'-end 5'-phospho-2'-deoxyribonucleoside-DNA + H(+). Its function is as follows. Involved in base excision repair of DNA damaged by oxidation or by mutagenic agents. Acts as a DNA glycosylase that recognizes and removes damaged bases. Has a preference for oxidized purines, such as 7,8-dihydro-8-oxoguanine (8-oxoG). Has AP (apurinic/apyrimidinic) lyase activity and introduces nicks in the DNA strand. Cleaves the DNA backbone by beta-delta elimination to generate a single-strand break at the site of the removed base with both 3'- and 5'-phosphates. This Aromatoleum aromaticum (strain DSM 19018 / LMG 30748 / EbN1) (Azoarcus sp. (strain EbN1)) protein is Formamidopyrimidine-DNA glycosylase.